A 351-amino-acid polypeptide reads, in one-letter code: Probable cell division control protein 7 homolog 1 (351 aa).

The Protein kinase domain maps to 21–341; that stretch reads YTPIEKIGEG…ASDALSHPFF (321 aa). ATP contacts are provided by residues 27 to 35 and Lys-50; that span reads IGEGSFSVV. The active-site Proton acceptor is the Asp-137.

It belongs to the protein kinase superfamily. Ser/Thr protein kinase family. CDC7 subfamily. Requires Mg(2+) as cofactor.

The enzyme catalyses L-seryl-[protein] + ATP = O-phospho-L-seryl-[protein] + ADP + H(+). It catalyses the reaction L-threonyl-[protein] + ATP = O-phospho-L-threonyl-[protein] + ADP + H(+). Functionally, serine/threonine-protein kinase. Needed for the initiation of DNA synthesis during mitosis as well as for synaptonemal complex formation and commitment to recombination during meiosis. The protein is Probable cell division control protein 7 homolog 1 (CDC7-1) of Encephalitozoon cuniculi (strain GB-M1) (Microsporidian parasite).